A 104-amino-acid polypeptide reads, in one-letter code: L-rhamnose mutarotase (104 aa).

Tyr18 contributes to the substrate binding site. His22 serves as the catalytic Proton donor. Residues Tyr41 and 76 to 77 (WW) each bind substrate.

Belongs to the rhamnose mutarotase family. As to quaternary structure, homodimer.

The protein resides in the cytoplasm. The catalysed reaction is alpha-L-rhamnose = beta-L-rhamnose. The protein operates within carbohydrate metabolism; L-rhamnose metabolism. In terms of biological role, involved in the anomeric conversion of L-rhamnose. The sequence is that of L-rhamnose mutarotase from Sinorhizobium fredii (strain NBRC 101917 / NGR234).